A 400-amino-acid polypeptide reads, in one-letter code: 3-phenylpropionate/cinnamic acid dioxygenase ferredoxin--NAD(+) reductase component (400 aa).

5–36 (TIIIVGGGQAAAMAAASLRQQGFTGELHLFSD) lines the FAD pocket. 146–174 (SVVIVGAGTIGLELAASATQRRCKVTVIE) serves as a coordination point for NAD(+).

It belongs to the bacterial ring-hydroxylating dioxygenase ferredoxin reductase family. This dioxygenase system consists of four proteins: the two subunits of the hydroxylase component (HcaE and HcaF), a ferredoxin (HcaC) and a ferredoxin reductase (HcaD). The cofactor is FAD.

It catalyses the reaction 2 reduced [2Fe-2S]-[ferredoxin] + NAD(+) + H(+) = 2 oxidized [2Fe-2S]-[ferredoxin] + NADH. It functions in the pathway aromatic compound metabolism; 3-phenylpropanoate degradation. Part of the multicomponent 3-phenylpropionate dioxygenase, that converts 3-phenylpropionic acid (PP) and cinnamic acid (CI) into 3-phenylpropionate-dihydrodiol (PP-dihydrodiol) and cinnamic acid-dihydrodiol (CI-dihydrodiol), respectively. The chain is 3-phenylpropionate/cinnamic acid dioxygenase ferredoxin--NAD(+) reductase component from Escherichia coli (strain 55989 / EAEC).